The following is a 128-amino-acid chain: Lutropin subunit beta (128 aa).

Disulfide bonds link C18/C66, C32/C81, C35/C119, C43/C97, C47/C99, and C102/C109. N-linked (GlcNAc...) asparagine glycosylation is present at N22.

The protein belongs to the glycoprotein hormones subunit beta family. In terms of assembly, heterodimer of a common alpha chain and a unique beta chain which confers biological specificity to thyrotropin, lutropin, follitropin and gonadotropin.

The protein resides in the secreted. In terms of biological role, promotes spermatogenesis and ovulation by stimulating the testes and ovaries to synthesize steroids. In Struthio camelus (Common ostrich), this protein is Lutropin subunit beta (LHB).